An 82-amino-acid polypeptide reads, in one-letter code: Small ribosomal subunit protein eS27 (82 aa).

4 residues coordinate Zn(2+): Cys37, Cys40, Cys56, and Cys59.

The protein belongs to the eukaryotic ribosomal protein eS27 family. In terms of assembly, component of the small ribosomal subunit. Mature ribosomes consist of a small (40S) and a large (60S) subunit. The 40S subunit contains about 32 different proteins and 1 molecule of RNA (18S). The 60S subunit contains 45 different proteins and 3 molecules of RNA (25S, 5.8S and 5S). It depends on Zn(2+) as a cofactor.

It localises to the cytoplasm. Its function is as follows. Component of the ribosome, a large ribonucleoprotein complex responsible for the synthesis of proteins in the cell. The small ribosomal subunit (SSU) binds messenger RNAs (mRNAs) and translates the encoded message by selecting cognate aminoacyl-transfer RNA (tRNA) molecules. The large subunit (LSU) contains the ribosomal catalytic site termed the peptidyl transferase center (PTC), which catalyzes the formation of peptide bonds, thereby polymerizing the amino acids delivered by tRNAs into a polypeptide chain. The nascent polypeptides leave the ribosome through a tunnel in the LSU and interact with protein factors that function in enzymatic processing, targeting, and the membrane insertion of nascent chains at the exit of the ribosomal tunnel. The polypeptide is Small ribosomal subunit protein eS27 (RPS27) (Candida albicans (strain SC5314 / ATCC MYA-2876) (Yeast)).